The sequence spans 552 residues: Nucleolar complex protein 4 (552 aa).

The protein belongs to the CBF/MAK21 family. In terms of assembly, interacts with NOP14 and MPP10. Interacts with snoRNA U3. Component of the ribosomal small subunit (SSU) processome composed of at least 40 protein subunits and snoRNA U3.

Its subcellular location is the nucleus. The protein resides in the nucleolus. Functionally, involved in nucleolar processing of pre-18S ribosomal RNA and ribosome assembly. Has a role in the nuclear export of 40S pre-ribosomal subunit to the cytoplasm. Its subcellular location and association with pre-40S subunit are unaffected by RPS19 disruptions, suggesting it acts before the ribosomal protein. In Saccharomyces cerevisiae (strain ATCC 204508 / S288c) (Baker's yeast), this protein is Nucleolar complex protein 4 (NOC4).